Here is a 687-residue protein sequence, read N- to C-terminus: DnaJ protein ERDJ2A (687 aa).

Residues 1–8 (MAASEENS) lie on the Lumenal side of the membrane. Residues 9–29 (ALFPIFILTIMAIPLVPYTMV) form a helical membrane-spanning segment. Over 30–65 (KLSGALSKKQRTIHCQCLECDRSGKYKRSLFKKISN) the chain is Cytoplasmic. A helical membrane pass occupies residues 66–86 (FSTWSNLTLVLLWVVMIFLIY). At 87-190 (YTKNMSREAQ…FLLDIDGASG (104 aa)) the chain is on the lumenal side. The N-linked (GlcNAc...) asparagine glycan is linked to Asn-90. Residues 99-164 (DPFSILGLEP…VSRENFEKYG (66 aa)) enclose the J domain. Residues 191–211 (GILLLWIVGVCILLPLVIAVI) form a helical membrane-spanning segment. In terms of domain architecture, SEC63 spans 205-603 (PLVIAVIYLS…IGCDKKQALK (399 aa)). Residues 212–687 (YLSRSSKYTG…SSEESGSEEE (476 aa)) are Cytoplasmic-facing. Positions 619–687 (SDEGAIAEEG…SSEESGSEEE (69 aa)) are disordered. Positions 623–654 (AIAEEGMEEEDEIEEEDYDDDYESEYSEDEDE) are enriched in acidic residues.

Interacts with OEP61/TPR7. Expressed in leaves, flower buds and flowers.

It localises to the endoplasmic reticulum membrane. In terms of biological role, required for integral membrane and secreted preprotein translocation across the endoplasmic reticulum membrane. This Arabidopsis thaliana (Mouse-ear cress) protein is DnaJ protein ERDJ2A (ERDJ2A).